The following is a 767-amino-acid chain: Slo-interacting protein 1 (767 aa).

Residues 202 to 280 (QQSSTDTNKG…SVTLLVSRIL (79 aa)) form the PDZ domain. Disordered regions lie at residues 521–557 (GNAA…NPDE) and 744–767 (KEER…QQQQ). A compositionally biased stretch (polar residues) spans 532-555 (NSSSAYNTGDSNNSASPHQNTTNP). Residues 744–755 (KEERKRHIERAR) are compositionally biased toward basic and acidic residues.

Interacts with Slo. In embryos, it is expressed throughout the CNS and in several peripheral locations. Colocalizes with Slo.

Its function is as follows. May selectively reduce calcium-activated potassium channel (Slo) currents by reducing the number of Slo channels in the plasma membrane. In Drosophila melanogaster (Fruit fly), this protein is Slo-interacting protein 1 (Slip1).